The chain runs to 615 residues: Protein DBF4 homolog B (615 aa).

Residues 43–133 (ARKHPFSGKS…DPKGSHPRPS (91 aa)) enclose the BRCT domain. Disordered stretches follow at residues 93–141 (REVK…DSVP) and 264–293 (FEAP…AHTM). A compositionally biased stretch (basic and acidic residues) spans 275–284 (HTRESKDGEP). Residues 294–343 (PRRKKGYCECCQEAFEELHVHLQSAQHRSFALEAHLYAEVDRIIAQLSHS) form a DBF4-type zinc finger. 4 residues coordinate Zn(2+): C301, C304, H314, and H320. Residues 371 to 407 (TLHPHQPSHPRAASPRIRKEDSCQASVTQGRAAGQQR) form a disordered region.

As to quaternary structure, forms a complex with CDC7. Note that CDC7 forms distinct complex either with DBF4/DBF4A or DBF4B. Such complexes are stable upon replication stress. Post-translationally, phosphorylated. As to expression, widely expressed. Highly expressed in testis.

The protein resides in the nucleus. Functionally, regulatory subunit for CDC7 which activates its kinase activity thereby playing a central role in DNA replication and cell proliferation. Required for progression of S and M phases. The complex CDC7-DBF4B selectively phosphorylates MCM2 subunit at 'Ser-40' and then is involved in regulating the initiation of DNA replication during cell cycle. The chain is Protein DBF4 homolog B (DBF4B) from Homo sapiens (Human).